The chain runs to 146 residues: Basic phospholipase A2 (146 aa).

The first 21 residues, 1 to 21 (MYPAHLLVLLAVCVSLLGAAS), serve as a signal peptide directing secretion. The propeptide occupies 22 to 27 (IPPLPL). 7 disulfides stabilise this stretch: Cys38-Cys98, Cys54-Cys145, Cys56-Cys72, Cys71-Cys126, Cys78-Cys119, Cys87-Cys112, and Cys105-Cys117. Positions 55, 57, and 59 each coordinate Ca(2+). His75 is an active-site residue. Asp76 contributes to the Ca(2+) binding site. The active site involves Asp120.

This sequence belongs to the phospholipase A2 family. Group I subfamily. D49 sub-subfamily. Ca(2+) serves as cofactor. As to expression, expressed by the venom gland.

It is found in the secreted. The enzyme catalyses a 1,2-diacyl-sn-glycero-3-phosphocholine + H2O = a 1-acyl-sn-glycero-3-phosphocholine + a fatty acid + H(+). In terms of biological role, snake venom phospholipase A2 (PLA2) that inhibits neuromuscular transmission by blocking acetylcholine release from the nerve termini. PLA2 catalyzes the calcium-dependent hydrolysis of the 2-acyl groups in 3-sn-phosphoglycerides. The protein is Basic phospholipase A2 of Hydrophis hardwickii (Hardwick's spine-bellied seasnake).